The chain runs to 260 residues: Hydroxyethylthiazole kinase 1 (260 aa).

Met39 lines the substrate pocket. Arg115 and Thr160 together coordinate ATP. Residue Gly187 coordinates substrate.

It belongs to the Thz kinase family. Mg(2+) is required as a cofactor.

It catalyses the reaction 5-(2-hydroxyethyl)-4-methylthiazole + ATP = 4-methyl-5-(2-phosphooxyethyl)-thiazole + ADP + H(+). It participates in cofactor biosynthesis; thiamine diphosphate biosynthesis; 4-methyl-5-(2-phosphoethyl)-thiazole from 5-(2-hydroxyethyl)-4-methylthiazole: step 1/1. In terms of biological role, catalyzes the phosphorylation of the hydroxyl group of 4-methyl-5-beta-hydroxyethylthiazole (THZ). This chain is Hydroxyethylthiazole kinase 1, found in Streptococcus pneumoniae serotype 2 (strain D39 / NCTC 7466).